Here is a 419-residue protein sequence, read N- to C-terminus: 3-oxo-isoapionate-4-phosphate decarboxylase (419 aa).

Positions 179, 181, and 182 each coordinate Mg(2+). Lys179 bears the N6-carboxylysine mark.

This sequence belongs to the RuBisCO large chain family. It depends on Mg(2+) as a cofactor.

The catalysed reaction is 3-oxoisoapionate 4-phosphate + H(+) = L-erythrulose 1-phosphate + CO2. The protein operates within carbohydrate metabolism. In terms of biological role, involved in catabolism of D-apiose. Catalyzes the decarboxylation of 3-oxo-isoapionate 4-phosphate to L-erythrulose 1-phosphate. The protein is 3-oxo-isoapionate-4-phosphate decarboxylase of Rhizobium rhizogenes (strain K84 / ATCC BAA-868) (Agrobacterium radiobacter).